The following is a 501-amino-acid chain: Histone deacetylase 19 (501 aa).

A histone deacetylase region spans residues Arg17–Gly329. Residue His149 is the Proton donor/acceptor of the active site. Residues Asp184, His186, and Asp272 each coordinate Zn(2+). The disordered stretch occupies residues His383 to Thr501. Positions Glu397 to Asp407 are enriched in acidic residues. Phosphoserine is present on Ser416. Basic and acidic residues-rich tracts occupy residues Asp422–Glu457 and Ala479–Thr488.

It belongs to the histone deacetylase family. HD type 1 subfamily. Interacts with SIN3, SAP18 and TPR1. Interacts with CDKE-1, MED14 and LUG. Interacts with TPL. Interacts with AHL22. Requires Zn(2+) as cofactor. In terms of tissue distribution, highly expressed in leaves, stems, flowers and young siliques.

Its subcellular location is the nucleus. The enzyme catalyses N(6)-acetyl-L-lysyl-[histone] + H2O = L-lysyl-[histone] + acetate. Responsible for the deacetylation of lysine residues on the N-terminal part of the core histones (H2A, H2B, H3 and H4). Histone deacetylation gives a tag for epigenetic repression and plays an important role in transcriptional regulation, cell cycle progression and developmental events. Histone deacetylases act via the formation of large multiprotein complexes. HDA19 is involved in jasmonic acid and ethylene signaling of pathogen response. Part of a repressor complex including APETALA2 (AP2) and TOPLESS (TPL) that control the expression domains of numerous floral organ identity genes. Involved in negative regulation of salinity stress response. Represses the expression of stress tolerance-related genes, genes coding for late embryogenesis abundant (LEA) proteins that prevent protein aggregation, and positive regulators of abscisic acid (ABA) signaling, such as ABI5 and NAC019. The sequence is that of Histone deacetylase 19 from Arabidopsis thaliana (Mouse-ear cress).